Reading from the N-terminus, the 305-residue chain is Translation initiation factor eIF2B subunit alpha (305 aa).

N6-acetyllysine is present on Lys-35.

The protein belongs to the eIF-2B alpha/beta/delta subunits family. Component of the translation initiation factor 2B (eIF2B) complex which is a heterodecamer of two sets of five different subunits: alpha, beta, gamma, delta and epsilon. Subunits alpha, beta and delta comprise a regulatory subcomplex and subunits epsilon and gamma comprise a catalytic subcomplex. Within the complex, the hexameric regulatory complex resides at the center, with the two heterodimeric catalytic subcomplexes bound on opposite sides.

It localises to the cytoplasm. Its subcellular location is the cytosol. Activated by the chemical integrated stress response (ISR) inhibitor ISRIB which stimulates guanine nucleotide exchange factor activity for both phosphorylated and unphosphorylated eIF2. Acts as a component of the translation initiation factor 2B (eIF2B) complex, which catalyzes the exchange of GDP for GTP on eukaryotic initiation factor 2 (eIF2) gamma subunit. Its guanine nucleotide exchange factor activity is repressed when bound to eIF2 complex phosphorylated on the alpha subunit, thereby limiting the amount of methionyl-initiator methionine tRNA available to the ribosome and consequently global translation is repressed. The chain is Translation initiation factor eIF2B subunit alpha (EIF2B1) from Macaca fascicularis (Crab-eating macaque).